Here is a 114-residue protein sequence, read N- to C-terminus: RutC family protein YoaB (114 aa).

This sequence belongs to the RutC family.

This Escherichia coli O6:H1 (strain CFT073 / ATCC 700928 / UPEC) protein is RutC family protein YoaB (yoaB).